Here is a 248-residue protein sequence, read N- to C-terminus: PF03932 family protein CutC (248 aa).

Belongs to the CutC family. In terms of assembly, homodimer.

The protein localises to the cytoplasm. In Salmonella typhimurium (strain LT2 / SGSC1412 / ATCC 700720), this protein is PF03932 family protein CutC.